A 149-amino-acid polypeptide reads, in one-letter code: Detocs response regulatory protein DtcB (149 aa).

Residues 1-134 (MILIVEDDAH…DIEACYYDHN (134 aa)) enclose the Response regulatory domain. The residue at position 53 (Asp53) is a 4-aspartylphosphate.

Post-translationally, probably phosphorylated by DtcA.

Functionally, possible phosphate scavenger member of the two-component regulatory system Detocs that confers resistance to bacteriophage. When the system (DtcA-DtcB-DtcC) is expressed in a susceptible E.coli (strain MG1655) it confers resistance to bacteriophages T2, T4, T5, T6 and SECphi27. Detocs inhibits T5 infection leading to growth arrest but not complete cell lysis, during SECphi27 infection leads to cell lysis. Overexpression of this protein along with the intact Detocs locus cancels T5 immunity; when the phosphate-receiving Asp-53 is mutated to Ala in this protein, immunity is restored. DtcA probably autophosphorylates upon sensing viral infection, and subsequently transfers the phosphate signal to DtcC which activates it, leading to an antiviral defense; DtcB (this subunit) may scavenge phosphorylation signals from accidental activation of DtcA. The polypeptide is Detocs response regulatory protein DtcB (Vibrio alginolyticus).